The sequence spans 374 residues: DNA replication and repair protein RecF (374 aa).

30–37 (GENAQGKT) is an ATP binding site.

Belongs to the RecF family.

It is found in the cytoplasm. The RecF protein is involved in DNA metabolism; it is required for DNA replication and normal SOS inducibility. RecF binds preferentially to single-stranded, linear DNA. It also seems to bind ATP. This chain is DNA replication and repair protein RecF, found in Pediococcus pentosaceus (strain ATCC 25745 / CCUG 21536 / LMG 10740 / 183-1w).